The primary structure comprises 194 residues: PPE family protein PPE41 (194 aa).

This sequence belongs to the mycobacterial PPE family. In terms of assembly, forms a heterodimer with PE25. The dimer forms a 1:1:1 heterotrimeric complex with EspG5. PPE41 interacts directly with EspG5.

It localises to the secreted. The protein localises to the cell surface. Its function is as follows. The PE25/PPE41 dimer induces both a strong humoral and cellular immune response. The dimer induces necrosis, but not apoptosis, in mouse macrophage cells. It also induces activation and maturation of mouse dendritic cells and drives Th2-biased immune responses. In Mycobacterium tuberculosis (strain ATCC 25618 / H37Rv), this protein is PPE family protein PPE41.